We begin with the raw amino-acid sequence, 312 residues long: Olfactory receptor 10D3 (312 aa).

Residues 1–26 (MEIKNCSVVTEFILLGIPHTEGFETL) are Extracellular-facing. Residue Asn5 is glycosylated (N-linked (GlcNAc...) asparagine). A helical membrane pass occupies residues 27–47 (LFVLFLPFYACTLVGNVSILV). Residues 48–57 (AVISSTRLHT) are Cytoplasmic-facing. A helical membrane pass occupies residues 58-78 (PMYFFLGNLSVFDMGFSSVTC). At 79-97 (PKMLFYLMGLSRLISYQDC) the chain is on the extracellular side. A disulfide bridge links Cys97 with Cys179. Residues 98–118 (VSQLFFFHFLGSIECFLYTVM) form a helical membrane-spanning segment. Residues 119–139 (AYDRFAAICHPLRYSVIMNSK) are Cytoplasmic-facing. Residues 140 to 160 (ICVALAVGTWLLGCFHSSVLT) form a helical membrane-spanning segment. Over 161–197 (SLTFTLPYCGPNEVDHFFCDIPAILPLASADTSLAQR) the chain is Extracellular. Residues 198-218 (VSFTNVGLVSLVCFLLILLSY) traverse the membrane as a helical segment. Residues 219–239 (TRITISILSIQSTEGRQRAFS) lie on the Cytoplasmic side of the membrane. A helical transmembrane segment spans residues 240-260 (TCSAHLIAILCAYGPIITIYL). The Extracellular segment spans residues 261-266 (QPTPNP). A helical membrane pass occupies residues 267–287 (MLGTVVQILMNLVGPMLNPLI). Residues 288–312 (YTLRNKEVKIALKKILHGKGSVSEG) are Cytoplasmic-facing.

It belongs to the G-protein coupled receptor 1 family.

The protein resides in the cell membrane. In terms of biological role, potential odorant receptor. This Mus musculus (Mouse) protein is Olfactory receptor 10D3.